The sequence spans 255 residues: 2-dehydro-3,6-dideoxy-6-sulfogluconate aldolase (255 aa).

His-38 functions as the Proton acceptor in the catalytic mechanism. A divalent metal cation-binding residues include Glu-141 and Asp-167.

The protein belongs to the HpcH/HpaI aldolase family. Homohexamer; trimer of dimers. The cofactor is a divalent metal cation.

It carries out the reaction 2-dehydro-3,6-dideoxy-6-sulfo-D-gluconate = (2S)-3-sulfolactaldehyde + pyruvate. Catalyzes the retro-aldol cleavage of 2-dehydro-3,6-dideoxy-6-sulfo-D-gluconate to (2S)-3-sulfolactaldehyde and pyruvate. Is involved in a degradation pathway of sulfoquinovose (SQ) that allows P.putida SQ1 to use SQ as the sole carbon and energy source for growth. The polypeptide is 2-dehydro-3,6-dideoxy-6-sulfogluconate aldolase (Pseudomonas putida (Arthrobacter siderocapsulatus)).